The following is a 343-amino-acid chain: Vacuolar membrane protein Kpol_1003p17 (343 aa).

Residues 45-65 (TTDTSGTSTSSRDVSSGQSTL) are disordered. The chain crosses the membrane as a helical span at residues 101 to 121 (FIAVGSIIGGIFGGVLIWWMI). Residues 235 to 343 (EVLQQQRQRR…YLDDMLENDN (109 aa)) are disordered. A compositionally biased stretch (polar residues) spans 254–264 (ELPSTPPSNFK). Residues 269-280 (KPERSASPERKS) show a composition bias toward basic and acidic residues. Residues 281–290 (RSPIRQHRKN) are compositionally biased toward basic residues.

This sequence belongs to the PRM5 family.

It is found in the vacuole membrane. In Vanderwaltozyma polyspora (strain ATCC 22028 / DSM 70294 / BCRC 21397 / CBS 2163 / NBRC 10782 / NRRL Y-8283 / UCD 57-17) (Kluyveromyces polysporus), this protein is Vacuolar membrane protein Kpol_1003p17.